We begin with the raw amino-acid sequence, 997 residues long: Mannuronan C5-epimerase AlgE5 (997 aa).

7 PbH1 repeats span residues 133-155 (DRDV…DPHE), 157-179 (TINL…VADF), 180-202 (QIGG…NIVT), 204-226 (TNDF…VIQR), 257-279 (AHDV…RVYG), 280-315 (AEDV…GVSG), and 320-359 (TTGT…SVSN). Hemolysin-type calcium-binding repeat units lie at residues 388-403 (GTTG…AHET), 406-422 (GLDG…NDIL), 424-439 (GGAG…GADL), 557-573 (GHAG…DDIL), 574-590 (VGGA…GADL), 695-709 (GSAG…AADE), 712-729 (HGGA…ADVF), 828-839 (GSDGNDTLDGGS), 846-862 (GGAG…NDIL), and 864-880 (GGAG…SDIF).

The protein belongs to the D-mannuronate C5-epimerase family. It depends on Ca(2+) as a cofactor.

It localises to the secreted. The catalysed reaction is [(1-&gt;4)-beta-D-mannuronosyl](n) = [alginate](n). It participates in glycan biosynthesis; alginate biosynthesis. Its activity is regulated as follows. Inhibited by zinc. Converts beta-D-mannuronic acid (M) to alpha-L-guluronic acid (G), producing a polymer with gel-forming capacity, required for the formation of the cyst coat. This is Mannuronan C5-epimerase AlgE5 from Azotobacter vinelandii.